We begin with the raw amino-acid sequence, 437 residues long: 3-phosphoshikimate 1-carboxyvinyltransferase (437 aa).

Positions 28, 29, and 33 each coordinate 3-phosphoshikimate. Residue Lys28 participates in phosphoenolpyruvate binding. Positions 97 and 125 each coordinate phosphoenolpyruvate. 5 residues coordinate 3-phosphoshikimate: Ser168, Ser169, Gln170, Glu316, and His343. Gln170 lines the phosphoenolpyruvate pocket. The active-site Proton acceptor is Glu316. Phosphoenolpyruvate contacts are provided by Arg347, Arg388, and Lys413.

Belongs to the EPSP synthase family. Monomer.

It localises to the cytoplasm. The catalysed reaction is 3-phosphoshikimate + phosphoenolpyruvate = 5-O-(1-carboxyvinyl)-3-phosphoshikimate + phosphate. It participates in metabolic intermediate biosynthesis; chorismate biosynthesis; chorismate from D-erythrose 4-phosphate and phosphoenolpyruvate: step 6/7. Functionally, catalyzes the transfer of the enolpyruvyl moiety of phosphoenolpyruvate (PEP) to the 5-hydroxyl of shikimate-3-phosphate (S3P) to produce enolpyruvyl shikimate-3-phosphate and inorganic phosphate. This is 3-phosphoshikimate 1-carboxyvinyltransferase from Rhodococcus erythropolis (strain PR4 / NBRC 100887).